Reading from the N-terminus, the 260-residue chain is Malonyl-[acyl-carrier protein] O-methyltransferase (260 aa).

It belongs to the methyltransferase superfamily.

It catalyses the reaction malonyl-[ACP] + S-adenosyl-L-methionine = malonyl-[ACP] methyl ester + S-adenosyl-L-homocysteine. The protein operates within cofactor biosynthesis; biotin biosynthesis. Its function is as follows. Converts the free carboxyl group of a malonyl-thioester to its methyl ester by transfer of a methyl group from S-adenosyl-L-methionine (SAM). It allows to synthesize pimeloyl-ACP via the fatty acid synthetic pathway. The chain is Malonyl-[acyl-carrier protein] O-methyltransferase from Herminiimonas arsenicoxydans.